The chain runs to 351 residues: Calcium uniporter protein, mitochondrial (351 aa).

The N-terminal 50 residues, 1-50 (MAAAAGRSLLLLLSSRGGGGGGAGGCGALTAGCFPGLGVSRHRQQQHHRT), are a transit peptide targeting the mitochondrion. The Mitochondrial matrix portion of the chain corresponds to 51 to 233 (VHQRIASWQN…ISRKAEKRTT (183 aa)). Residues S57 and S92 each carry the phosphoserine; by CaMK2 modification. Residues 75–165 (VTVVYQNGLP…LTYHVRPPKR (91 aa)) form an N-terminal MCU domain region. C97 is subject to S-glutathionyl cysteine. A coiled-coil region spans residues 192 to 223 (IEQHQLNKERELIERLEDLKEQLAPLEKVRIE). A helical transmembrane segment spans residues 234 to 255 (LVLWGGLAYMATQFGILARLTW). Topologically, residues 256–262 (WEYSWDI) are mitochondrial intermembrane. Positions 260–268 (WDIMEPVTY) match the Selectivity filter motif. Residues 263 to 284 (MEPVTYFITYGSAMAMYAYFVM) traverse the membrane as a helical segment. E264 is a binding site for Ca(2+). The interval 285–290 (TRQEYV) is juxtamembrane helix. Over 285–351 (TRQEYVYPEA…LPLRQIGEKD (67 aa)) the chain is Mitochondrial matrix. Positions 311–339 (RFDLEKYNQLKDAIAQAEMDLKRLRDPLQ) form a coiled coil. An N6-acetyllysine modification is found at K332.

Belongs to the MCU (TC 1.A.77) family. As to quaternary structure, homotetramer. Component of the uniplex complex, composed of MCU, EMRE/SMDT1, MICU1 and MICU2 (or MICU3) in a 4:4:1:1 stoichiometry. Interacts with CCDC109B/MCUB; this inhibits channel activity. Interacts with MCUR1. Interactions with MICU1 and MCUR1 are mutually exclusive. Interacts with SLC25A23. In terms of processing, phosphorylation by CaMK2 in heart leads to increased MCU current. The regulation of MCU by CaMK2 is however subject to discussion: another group was unable to reproduce these results. Phosphorylated on tyrosines by PTK2B/PYK2, promoting oligomerization. Post-translationally, glutathionylation at Cys-97 in response to reactive oxygen species (ROS) promotes MCU higher-order assembly, leading to constitutive activation of the MCU channel and mitochondrial calcium overload. Undergoes proteolytic degradation by SPG7.

It localises to the mitochondrion inner membrane. It catalyses the reaction Ca(2+)(in) = Ca(2+)(out). With respect to regulation, MCU channel activity is regulated by the heterodimer composed of MICU1 and either MICU2 or MICU3, which act as calcium-sensors. At low calcium levels, MICU1 occludes the pore of the MCU channel, preventing mitochondrial calcium uptake. At higher calcium levels, calcium-binding to MICU1 and MICU2 (or MICU3) induces a conformational change that weakens MCU-MICU1 interactions and moves the MICU1-MICU2 heterodimer away from the pore, allowing calcium permeation through the channel. MCU channel activity is gated by EMRE/SMDT1 via the juxtamembrane helix loop. Inhibited by ruthenium red or its derivative Ru360. Channel-forming and calcium-conducting subunit of the mitochondrial inner membrane calcium uniporter complex (uniplex), which mediates calcium uptake into the mitochondrial matrix. MCU channel activity is regulated by the calcium-sensor subunits of the uniplex MICU1 and MICU2 (or MICU3). Mitochondrial calcium homeostasis plays key roles in cellular physiology and regulates ATP production, cytoplasmic calcium signals and activation of cell death pathways. Involved in buffering the amplitude of systolic calcium rises in cardiomyocytes. While dispensable for baseline homeostatic cardiac function, acts as a key regulator of short-term mitochondrial calcium loading underlying a 'fight-or-flight' response during acute stress: acts by mediating a rapid increase of mitochondrial calcium in pacemaker cells. Participates in mitochondrial permeability transition during ischemia-reperfusion injury. Mitochondrial calcium uptake in skeletal muscle cells is involved in muscle size in adults. Regulates synaptic vesicle endocytosis kinetics in central nerve terminal. Regulates glucose-dependent insulin secretion in pancreatic beta-cells by regulating mitochondrial calcium uptake. Involved in antigen processing and presentation. The chain is Calcium uniporter protein, mitochondrial from Homo sapiens (Human).